The following is a 397-amino-acid chain: Digeranylgeranylglycerophospholipid reductase 1 (397 aa).

A18, D37, C48, A49, G51, R104, A128, D284, G296, and I297 together coordinate FAD.

The protein belongs to the geranylgeranyl reductase family. DGGGPL reductase subfamily. FAD is required as a cofactor.

The enzyme catalyses a 2,3-bis-O-phytanyl-sn-glycerol 1-phospholipid + 8 A = a 2,3-bis-O-(geranylgeranyl)-sn-glycerol 1-phospholipid + 8 AH2. It carries out the reaction 2,3-bis-O-(phytanyl)-sn-glycerol 1-phosphate + 8 A = 2,3-bis-O-(geranylgeranyl)-sn-glycerol 1-phosphate + 8 AH2. It catalyses the reaction CDP-2,3-bis-O-(geranylgeranyl)-sn-glycerol + 8 AH2 = CDP-2,3-bis-O-(phytanyl)-sn-glycerol + 8 A. The catalysed reaction is archaetidylserine + 8 AH2 = 2,3-bis-O-phytanyl-sn-glycero-3-phospho-L-serine + 8 A. Its pathway is membrane lipid metabolism; glycerophospholipid metabolism. Is involved in the reduction of 2,3-digeranylgeranylglycerophospholipids (unsaturated archaeols) into 2,3-diphytanylglycerophospholipids (saturated archaeols) in the biosynthesis of archaeal membrane lipids. Catalyzes the formation of archaetidic acid (2,3-di-O-phytanyl-sn-glyceryl phosphate) from 2,3-di-O-geranylgeranylglyceryl phosphate (DGGGP) via the hydrogenation of each double bond of the isoprenoid chains. Is also probably able to reduce double bonds of geranyl groups in CDP-2,3-bis-O-(geranylgeranyl)-sn-glycerol and archaetidylserine, thus acting at various stages in the biosynthesis of archaeal membrane lipids. This chain is Digeranylgeranylglycerophospholipid reductase 1, found in Methanothermobacter thermautotrophicus (strain ATCC 29096 / DSM 1053 / JCM 10044 / NBRC 100330 / Delta H) (Methanobacterium thermoautotrophicum).